Reading from the N-terminus, the 312-residue chain is Olfactory receptor 4F15 (312 aa).

Residues 1-25 (MNGMNHSVVSEFVFMGLTNSREIQL) lie on the Extracellular side of the membrane. N-linked (GlcNAc...) asparagine glycosylation occurs at N5. The helical transmembrane segment at 26-49 (LLFVFSLLFYFASMMGNLVIVFTV) threads the bilayer. Over 50 to 57 (TMDAHLHS) the chain is Cytoplasmic. The chain crosses the membrane as a helical span at residues 58-79 (PMYFLLANLSIIDMAFCSITAP). The Extracellular segment spans residues 80–100 (KMICDIFKKHKAISFRGCITQ). Residues C97 and C189 are joined by a disulfide bond. Residues 101–120 (IFFSHALGGTEMVLLIAMAF) traverse the membrane as a helical segment. Topologically, residues 121–139 (DRYMAICKPLHYLTIMSPR) are cytoplasmic. The chain crosses the membrane as a helical span at residues 140-158 (MCLYFLATSSIIGLIHSLV). Over 159-195 (QLVFVVDLPFCGPNIFDSFYCDLPRLLRLACTNTQEL) the chain is Extracellular. A helical transmembrane segment spans residues 196 to 219 (EFMVTVNSGLISVGSFVLLVISYI). Over 220-235 (FILFTVWKHSSGGLAK) the chain is Cytoplasmic. A helical transmembrane segment spans residues 236–258 (ALSTLSAHVTVVILFFGPLMFFY). Residues 259–269 (TWPSPTSHLDK) are Extracellular-facing. A helical membrane pass occupies residues 270–289 (YLAIFDAFITPFLNPVIYTF). The Cytoplasmic portion of the chain corresponds to 290-312 (RNKDMKVAMRRLCSRLAHFTKIL).

Belongs to the G-protein coupled receptor 1 family.

Its subcellular location is the cell membrane. In terms of biological role, odorant receptor. The sequence is that of Olfactory receptor 4F15 (OR4F15) from Homo sapiens (Human).